We begin with the raw amino-acid sequence, 506 residues long: Dolabradiene monooxygenase (506 aa).

A helical membrane pass occupies residues V5–L25. C443 lines the heme pocket.

This sequence belongs to the cytochrome P450 family. Heme serves as cofactor.

It localises to the membrane. It catalyses the reaction dolabradiene + reduced [NADPH--hemoprotein reductase] + O2 = 15,16-epoxydolabrene + oxidized [NADPH--hemoprotein reductase] + H2O + H(+). The enzyme catalyses 15,16-epoxydolabrene + reduced [NADPH--hemoprotein reductase] + O2 = 3beta-hydroxy-15,16-epoxydolabrene + oxidized [NADPH--hemoprotein reductase] + H2O + H(+). Involved in the production of antifungal dolabralexin phytoalexins in response to biotic and abiotic stresses. Catalyzes the epoxidation of dolabradiene at C-16, followed by hydroxylation at C-3, to yield the epoxides 15,16-epoxydolabrene (epoxydolabrene) and 3b-hydroxy-15,16-epoxydolabrene (epoxydolabranol). The sequence is that of Dolabradiene monooxygenase from Zea mays (Maize).